Consider the following 531-residue polypeptide: MSVDPKKLNKEVAKRRTFAIISHPDAGKTTMTEKLLLWGQAIQVVGEVKGRKTDRHATSDWMSMEQERGISITTSVMQFPYQEHVVNLLDTPGHADFSEDTYRTLTAVDSALMMVDGAKGVEERTIKLMEVCRMRDTPIISFVNKLDRQIREPLELLSEIEAVLKIKCIPITWPIGMGQDFVGVYHLTENKTYFYEKGRGGEMTVSETREGYDYPDIRERLGALMFASFEESLELVQMALEDFDVDEFLAGEMTPVLFGTALGNFGVNMVLDTLIKYSPPPKAHPTNEREVAATETTFSGFVFKIQANMDPRHRDRIAFLRVCSGKYEKGMKLKHVRLGKDVRIADALTFLAGDRAALEEAYPGDIIGLHNHGTISIGDSFTEGEELNFTGIPHFAPELFRRVILKDPLKSKALQKGLQQLSEEGATQVFMPQINNDLILGAVGVLQFEVVAHRLKEEYKVQCIFEPVSIATVRWIHCDDEVALAKFKRKAHDQLSLDGGGHLTYLAPSRVNLQLMQDRYPEVTFSNTREH.

Positions 13-282 constitute a tr-type G domain; the sequence is AKRRTFAIIS…TLIKYSPPPK (270 aa). GTP-binding positions include 22 to 29, 90 to 94, and 144 to 147; these read SHPDAGKT, DTPGH, and NKLD.

It belongs to the TRAFAC class translation factor GTPase superfamily. Classic translation factor GTPase family. PrfC subfamily.

It localises to the cytoplasm. Increases the formation of ribosomal termination complexes and stimulates activities of RF-1 and RF-2. It binds guanine nucleotides and has strong preference for UGA stop codons. It may interact directly with the ribosome. The stimulation of RF-1 and RF-2 is significantly reduced by GTP and GDP, but not by GMP. The polypeptide is Peptide chain release factor 3 (Psychrobacter arcticus (strain DSM 17307 / VKM B-2377 / 273-4)).